Here is a 492-residue protein sequence, read N- to C-terminus: Transmembrane protein 39B (492 aa).

Residues 1 to 54 (MGGRRGPNRTSYCRNPLCEPGSSGGSSGSHTSSASVTSVRSRTRSSSGTGLSSP) form a disordered region. N-linked (GlcNAc...) asparagine glycosylation occurs at Asn8. The span at 28–53 (GSHTSSASVTSVRSRTRSSSGTGLSS) shows a compositional bias: low complexity. A run of 8 helical transmembrane segments spans residues 77 to 97 (SILF…VHYI), 115 to 135 (TSLN…IVLG), 153 to 175 (SLFR…GWSL), 185 to 205 (TYSF…IPFL), 288 to 308 (EVLV…VWFV), 322 to 342 (LFLL…LPAS), 421 to 441 (ILNI…YSLM), and 447 to 467 (HQTI…FKLL).

This sequence belongs to the TMEM39 family.

Its subcellular location is the endoplasmic reticulum membrane. May protect the cells against DNA damage caused by exposure to the cold-warming stress and facilitates tissue damage repair during the recovery phase. This is Transmembrane protein 39B from Homo sapiens (Human).